The following is a 305-amino-acid chain: UDP-3-O-acyl-N-acetylglucosamine deacetylase (305 aa).

The Zn(2+) site is built by histidine 78, histidine 237, and aspartate 241. Histidine 264 serves as the catalytic Proton donor.

Belongs to the LpxC family. The cofactor is Zn(2+).

The enzyme catalyses a UDP-3-O-[(3R)-3-hydroxyacyl]-N-acetyl-alpha-D-glucosamine + H2O = a UDP-3-O-[(3R)-3-hydroxyacyl]-alpha-D-glucosamine + acetate. The protein operates within glycolipid biosynthesis; lipid IV(A) biosynthesis; lipid IV(A) from (3R)-3-hydroxytetradecanoyl-[acyl-carrier-protein] and UDP-N-acetyl-alpha-D-glucosamine: step 2/6. Its function is as follows. Catalyzes the hydrolysis of UDP-3-O-myristoyl-N-acetylglucosamine to form UDP-3-O-myristoylglucosamine and acetate, the committed step in lipid A biosynthesis. This chain is UDP-3-O-acyl-N-acetylglucosamine deacetylase, found in Burkholderia lata (strain ATCC 17760 / DSM 23089 / LMG 22485 / NCIMB 9086 / R18194 / 383).